A 298-amino-acid chain; its full sequence is Methylsterol monooxygenase 1-1 (298 aa).

The next 3 helical transmembrane spans lie at 42–62 (ILFL…VELA), 96–116 (FILV…MIEI), and 118–138 (SGLP…YFLI). The Fatty acid hydroxylase domain occupies 132–267 (LVVYFLIEDY…FTYCDYIYGT (136 aa)). The short motif at 147 to 151 (HRFFH) is the Histidine box-1 element. The Histidine box-2 motif lies at 160–164 (HRVHH). The helical transmembrane segment at 189–209 (TFMGPAIAPGHMITFWLWIAL) threads the bilayer. A Histidine box-3 motif is present at residues 239–245 (YHDYHHY).

This sequence belongs to the sterol desaturase family. As to quaternary structure, interacts with ACBP1. Requires Fe cation as cofactor. As to expression, expressed in rosettes, stems, roots, floral buds, flowers and siliques.

The protein resides in the endoplasmic reticulum membrane. It catalyses the reaction 4,4-dimethyl-5alpha-cholest-7-en-3beta-ol + 6 Fe(II)-[cytochrome b5] + 3 O2 + 5 H(+) = 4alpha-carboxy-4beta-methyl-5alpha-cholest-7-ene-3beta-ol + 6 Fe(III)-[cytochrome b5] + 4 H2O. The enzyme catalyses 24-methylenecycloartanol + 6 Fe(II)-[cytochrome b5] + 3 O2 + 5 H(+) = 4alpha-carboxy-4beta,14alpha-dimethyl-9beta,19-cyclo-5alpha-ergost-24(24(1))-en-3beta-ol + 6 Fe(III)-[cytochrome b5] + 4 H2O. Functionally, non-heme iron oxygenase involved in sterols biosynthesis by catalyzing the removal of the first methyl group at the C-4 position. 4,4-dimethyl-9-beta,19-cyclopropylsterols such as 24-methylenecycloartanol are the preferred substrates. Acts as a rate-limiting enzyme in the sterol pathway via interaction with ACBP1; sterols serve as lipid modulators for gene expression of homeodomain-leucine zipper IV transcription factors. Together with SMO1-2, involved in the maintenance of sterol composition to balance auxin and cytokinin activities during embryogenesis. The protein is Methylsterol monooxygenase 1-1 of Arabidopsis thaliana (Mouse-ear cress).